The chain runs to 117 residues: Large ribosomal subunit protein bL20 (117 aa).

This sequence belongs to the bacterial ribosomal protein bL20 family.

Binds directly to 23S ribosomal RNA and is necessary for the in vitro assembly process of the 50S ribosomal subunit. It is not involved in the protein synthesizing functions of that subunit. The polypeptide is Large ribosomal subunit protein bL20 (Acetivibrio thermocellus (strain ATCC 27405 / DSM 1237 / JCM 9322 / NBRC 103400 / NCIMB 10682 / NRRL B-4536 / VPI 7372) (Clostridium thermocellum)).